An 88-amino-acid polypeptide reads, in one-letter code: DNA-directed RNA polymerase subunit omega (88 aa).

This sequence belongs to the RNA polymerase subunit omega family. In terms of assembly, the RNAP catalytic core consists of 2 alpha, 1 beta, 1 beta' and 1 omega subunit. When a sigma factor is associated with the core the holoenzyme is formed, which can initiate transcription.

The enzyme catalyses RNA(n) + a ribonucleoside 5'-triphosphate = RNA(n+1) + diphosphate. Promotes RNA polymerase assembly. Latches the N- and C-terminal regions of the beta' subunit thereby facilitating its interaction with the beta and alpha subunits. The sequence is that of DNA-directed RNA polymerase subunit omega from Pseudomonas aeruginosa (strain LESB58).